The sequence spans 406 residues: Subtilisin-like protease CPC735_023170 (406 aa).

Positions 1 to 20 are cleaved as a signal peptide; the sequence is MRLFQSTCVLVGTVLPLFTA. A propeptide spanning residues 21–118 is cleaved from the precursor; sequence FPISSPREIE…VEPDSMAYVT (98 aa). In terms of domain architecture, Inhibitor I9 spans 35 to 115; that stretch reads KYIITFKKGI…VESVEPDSMA (81 aa). A glycan (N-linked (GlcNAc...) asparagine) is linked at Asn125. One can recognise a Peptidase S8 domain in the interval 127-406; the sequence is TYGPRRISHR…NKLAYNGSGK (280 aa). Catalysis depends on charge relay system residues Asp161 and His192. A glycan (N-linked (GlcNAc...) asparagine) is linked at Asn239. The segment at 283–309 is disordered; the sequence is NDGRDAGRNSPGSAPESITVGSINSRR. Asn346 carries N-linked (GlcNAc...) asparagine glycosylation. Ser351 serves as the catalytic Charge relay system. Asn402 carries N-linked (GlcNAc...) asparagine glycosylation.

The protein belongs to the peptidase S8 family.

The protein resides in the secreted. Its function is as follows. Secreted subtilisin-like serine protease with keratinolytic activity that contributes to pathogenicity. This Coccidioides posadasii (strain C735) (Valley fever fungus) protein is Subtilisin-like protease CPC735_023170.